The sequence spans 842 residues: Non-motile and phage-resistance protein (842 aa).

3 helical membrane-spanning segments follow: residues 29–50, 283–303, and 343–363; these read VFVR…AFGV, GAFS…LLMI, and VYLS…VVSG. In terms of domain architecture, PAS spans 318-389; it reads SERRFRLAVE…QALANAAMYG (72 aa). The region spanning 607 to 830 is the Histidine kinase domain; that stretch reads NMSHELRTPL…TVSFTLPVRH (224 aa). The residue at position 610 (histidine 610) is a Phosphohistidine; by autocatalysis.

It is found in the cell membrane. It carries out the reaction ATP + protein L-histidine = ADP + protein N-phospho-L-histidine.. Its function is as follows. Member of the two-component regulatory system involved in the regulation of polar organelle development. PleC functions as a membrane-associated protein kinase that transfers phosphate to the response regulator PleD, leading to its activation. The chain is Non-motile and phage-resistance protein (pleC) from Caulobacter vibrioides (strain ATCC 19089 / CIP 103742 / CB 15) (Caulobacter crescentus).